The chain runs to 219 residues: ATP synthase protein MI25 (219 aa).

The helical transmembrane segment at 29–49 threads the bilayer; it reads ISIYNEEMIVARCFIGFLILS.

Belongs to the ATPase protein MI25 family. As to quaternary structure, F-type ATPases have 2 components, CF(1) - the catalytic core - and CF(0) - the membrane proton channel. CF(1) has five subunits: alpha(3), beta(3), gamma(1), delta(1), epsilon(1). CF(0) has three main subunits: a, b and c.

Its subcellular location is the mitochondrion membrane. This is one of the chains of the nonenzymatic component (CF(0) subunit) of the mitochondrial ATPase complex. The chain is ATP synthase protein MI25 from Zea mays (Maize).